The sequence spans 433 residues: Serine hydroxymethyltransferase (433 aa).

Position 122-124 (122-124) interacts with (6S)-5,6,7,8-tetrahydrofolate; sequence AHV. The residue at position 228 (lysine 228) is an N6-(pyridoxal phosphate)lysine.

Belongs to the SHMT family. As to quaternary structure, homodimer. Pyridoxal 5'-phosphate is required as a cofactor.

It is found in the cytoplasm. Its pathway is amino-acid biosynthesis; glycine biosynthesis; glycine from L-serine: step 1/1. Its function is as follows. Catalyzes the reversible interconversion of serine and glycine with a modified folate serving as the one-carbon carrier. Also exhibits a pteridine-independent aldolase activity toward beta-hydroxyamino acids, producing glycine and aldehydes, via a retro-aldol mechanism. The chain is Serine hydroxymethyltransferase from Sulfolobus acidocaldarius (strain ATCC 33909 / DSM 639 / JCM 8929 / NBRC 15157 / NCIMB 11770).